The chain runs to 103 residues: Large ribosomal subunit protein bL21 (103 aa).

The protein belongs to the bacterial ribosomal protein bL21 family. Part of the 50S ribosomal subunit. Contacts protein L20.

In terms of biological role, this protein binds to 23S rRNA in the presence of protein L20. This Cupriavidus necator (strain ATCC 17699 / DSM 428 / KCTC 22496 / NCIMB 10442 / H16 / Stanier 337) (Ralstonia eutropha) protein is Large ribosomal subunit protein bL21.